Consider the following 383-residue polypeptide: N-acetyldiaminopimelate deacetylase (383 aa).

The active site involves Asp75. Glu134 serves as the catalytic Proton acceptor.

Belongs to the peptidase M20A family. N-acetyldiaminopimelate deacetylase subfamily.

It carries out the reaction N-acetyl-(2S,6S)-2,6-diaminopimelate + H2O = (2S,6S)-2,6-diaminopimelate + acetate. It functions in the pathway amino-acid biosynthesis; L-lysine biosynthesis via DAP pathway; LL-2,6-diaminopimelate from (S)-tetrahydrodipicolinate (acetylase route): step 3/3. Functionally, catalyzes the conversion of N-acetyl-diaminopimelate to diaminopimelate and acetate. This is N-acetyldiaminopimelate deacetylase from Lactobacillus acidophilus (strain ATCC 700396 / NCK56 / N2 / NCFM).